Consider the following 194-residue polypeptide: Calcium channel flower (194 aa).

Transmembrane regions (helical) follow at residues 35–55 (LGIV…FSII), 66–88 (IIQM…VCFE), and 113–133 (AIPP…GLIF).

This sequence belongs to the calcium channel flower family. As to quaternary structure, homomultimer. Associates with the dally/ magu complex.

Its subcellular location is the cytoplasmic vesicle. The protein localises to the secretory vesicle. It localises to the synaptic vesicle membrane. It is found in the presynaptic cell membrane. The protein resides in the endosome. Channel activity is inhibited by La(3+), which reduces Ca(2+) influx and thus inhibits it's function in promoting activity-dependent bulk endocytosis (ADBE) in response to high stimuli. Its function is as follows. Transmembrane protein which mediates synaptic endocytosis, fitness-based cell culling, neuronal culling, morphogen gradient scaling, and calcium transport. Regulates synaptic endocytosis and hence couples exo- with endocytosis. Controls two major modes of synaptic vesicle (SV) endocytosis in the synaptic boutons of neuromuscular junctions (NMJs); Ca(2+) channel-independent Clathrin-mediated endocytosis (CME) in response to mild stimulation, and Ca(2+) channel-dependent activity-dependent bulk endocytosis (ADBE) in response to strong stimulation. Functions in ADBE and subsequent SV reformation from bulk endosomes by initiating Ca(2+) channel-dependent phosphatidylinositol 4,5-bisphosphate (PtdIns(4,5)P2) compartmentalization in synaptic boutons. There it acts at the periactive zone to provide the low Ca(2+) levels required to initiate Calcineurin activation and upregulate PtdIns(4,5)P2. Conversely PtdIns(4,5)P2 enhances fwe Ca(2+) channel-activity, establishing a positive feedback loop that induces PtdIns(4,5)P2 microdomain at the periactive zone. These microdomains trigger bulk membrane invagination (i.e. ADBE) by triggering actin polymerization while also promoting localization of fwe to bulk endosomes, thereby removing the ADBE trigger to reduce endocytosis and prevent excess membrane uptake. PtdIns(4,5)P2 then promotes SV reformation from the bulk endosomes, to coordinate ADBE and subsequent SV reformation. Different combinations of the flower isoforms at the cell membrane are also required for the identification and elimination of suboptimal or supernumerary cells during development, regeneration, and adulthood. Required for the recognition and elimination of unfit cells in the developing wing during cell competition. In the developing pupal retina, mediates the elimination of unwanted postmitotic neurons, including supernumerary photoreceptor neurons that form at the periphery of the retina and are contained within incomplete ommatidia units. Also required for efficient elimination and replacement of old neurons by newly generated neurons during regeneration in the adult brain following mechanical injury. Downstream of the flower fitness fingerprints, cells identified as unwanted or unfit are eliminated via apoptosis through the expression of ahuizotl (azot). However, the cells marked for elimination by the flower isoforms only undergo apoptosis if additional thresholds are met; (1) their neighboring fit/healthy cells express different levels of the fwe isoforms, and (2) the levels of the protective signal SPARC expressed by the loser or unwanted cells are unable to inhibit caspase activation. These additional thresholds for flower-mediated apoptosis, allows useful cells to recover from transient and limited stress before they are unnecessarily eliminated. Functions with dally and magu in a mechanism of scaling, which utilises apoptosis to ensure that the dpp morphogen gradient, which mediates organ growth, remains proportional to the size of the growing wing. In this mechanism, fwe represses dally- and Magu-dependent activity in expanding the gradient, and dally/Magu inhibits fwe-dependent apoptosis to keep cell death rate low. When the levels of these different proteins are optimally regulated the gradient correctly scales with organ growth but when this fails, fwe-mediated apoptosis is activated to trim the developing tissue to match the correct size of the gradient. This Drosophila yakuba (Fruit fly) protein is Calcium channel flower.